The primary structure comprises 267 residues: Hydroxynaphthalene reductase-like protein Arp2 (267 aa).

Residues isoleucine 25, asparagine 45, aspartate 71, and asparagine 98 each coordinate NADP(+). Catalysis depends on proton donor residues serine 147 and serine 148. 4 residues coordinate NADP(+): tyrosine 162, lysine 166, valine 195, and threonine 197. Residue tyrosine 162 is the Proton acceptor of the active site. The Lowers pKa of active site Tyr role is filled by lysine 166.

Belongs to the short-chain dehydrogenases/reductases (SDR) family.

In terms of biological role, hydroxynaphthalene reductase-like protein; part of the Pks2 gene cluster that mediates the formation of infectious structures (appressoria), enabling these fungi to kill insects faster. The product of the Pks2 gene cluster is different from the one of Pks1 and has still not been identified. The chain is Hydroxynaphthalene reductase-like protein Arp2 from Metarhizium robertsii (strain ARSEF 23 / ATCC MYA-3075) (Metarhizium anisopliae (strain ARSEF 23)).